Reading from the N-terminus, the 556-residue chain is 2-succinyl-5-enolpyruvyl-6-hydroxy-3-cyclohexene-1-carboxylate synthase (556 aa).

It belongs to the TPP enzyme family. MenD subfamily. In terms of assembly, homodimer. Mg(2+) serves as cofactor. It depends on Mn(2+) as a cofactor. Requires thiamine diphosphate as cofactor.

It carries out the reaction isochorismate + 2-oxoglutarate + H(+) = 5-enolpyruvoyl-6-hydroxy-2-succinyl-cyclohex-3-ene-1-carboxylate + CO2. The protein operates within quinol/quinone metabolism; 1,4-dihydroxy-2-naphthoate biosynthesis; 1,4-dihydroxy-2-naphthoate from chorismate: step 2/7. It functions in the pathway quinol/quinone metabolism; menaquinone biosynthesis. In terms of biological role, catalyzes the thiamine diphosphate-dependent decarboxylation of 2-oxoglutarate and the subsequent addition of the resulting succinic semialdehyde-thiamine pyrophosphate anion to isochorismate to yield 2-succinyl-5-enolpyruvyl-6-hydroxy-3-cyclohexene-1-carboxylate (SEPHCHC). This is 2-succinyl-5-enolpyruvyl-6-hydroxy-3-cyclohexene-1-carboxylate synthase from Shigella flexneri serotype 5b (strain 8401).